A 306-amino-acid chain; its full sequence is Pantothenate kinase (306 aa).

91-98 (GSVAVGKS) is an ATP binding site.

Belongs to the prokaryotic pantothenate kinase family.

The protein resides in the cytoplasm. The catalysed reaction is (R)-pantothenate + ATP = (R)-4'-phosphopantothenate + ADP + H(+). It functions in the pathway cofactor biosynthesis; coenzyme A biosynthesis; CoA from (R)-pantothenate: step 1/5. This is Pantothenate kinase from Streptococcus equi subsp. zooepidemicus (strain MGCS10565).